The following is a 475-amino-acid chain: 3-isopropylmalate dehydratase large subunit 1 (475 aa).

Cys353, Cys413, and Cys416 together coordinate [4Fe-4S] cluster.

The protein belongs to the aconitase/IPM isomerase family. LeuC type 1 subfamily. Heterodimer of LeuC and LeuD. [4Fe-4S] cluster is required as a cofactor.

It catalyses the reaction (2R,3S)-3-isopropylmalate = (2S)-2-isopropylmalate. It participates in amino-acid biosynthesis; L-leucine biosynthesis; L-leucine from 3-methyl-2-oxobutanoate: step 2/4. Functionally, catalyzes the isomerization between 2-isopropylmalate and 3-isopropylmalate, via the formation of 2-isopropylmaleate. The polypeptide is 3-isopropylmalate dehydratase large subunit 1 (Mannheimia succiniciproducens (strain KCTC 0769BP / MBEL55E)).